A 537-amino-acid polypeptide reads, in one-letter code: Senescence-associated carboxylesterase 101 (537 aa).

Positions 1-27 are cleaved as a signal peptide; the sequence is MESSSSLKGSALGKLVVTSGLLHSSWS. Residues 140–160 traverse the membrane as a helical segment; that stretch reads VIITGAALGGSVASLYTLWLL.

As to quaternary structure, part of a nuclear complex made of EDS1, PAD4 and SAG101, that can be redirected to the cytoplasm in the presence of an extranuclear form of EDS1. Interacts directly with EDS1. In terms of tissue distribution, expressed in senescing leaves.

It localises to the membrane. The protein resides in the nucleus. It is found in the cytoplasm. It catalyses the reaction a carboxylic ester + H2O = an alcohol + a carboxylate + H(+). Acyl hydrolase that triggers the leaf senescence onset. Can use triolein as substrate to produce oleic acids. In terms of biological role, involved in the EDS1-dependent intrinsic and indispensable resistance signaling pathway; together with PAD4, required for programmed cell death triggered by RPS4 in response to avirulent pathogens (e.g. P.syringae pv. tomato strain DC3000 and H.parasitica isolates CALA2 and EMWA1) and in restricting the growth of virulent pathogens (e.g. H.parasitica isolates NOCO2 and P.syringae pv. tomato strain DC3000 avrRps4). Contributes in reinforcing the immune response around hypersensitive response foci. Regulates the nuclear localization of EDS1. Essential for the RPP8/HRT-mediated resistance to the turnip crinkle virus (TCV). Involved in the post-invasion resistance to P.pachyrhizi in the mesophyll. This is Senescence-associated carboxylesterase 101 (SAG101) from Arabidopsis thaliana (Mouse-ear cress).